The chain runs to 410 residues: Toluene 1,2-dioxygenase system ferredoxin--NAD(+) reductase component (410 aa).

4 to 35 (HVAIIGNGVGGFTTAQALRAEGFEGRISLIGD) provides a ligand contact to FAD. An NAD(+)-binding site is contributed by 145 to 173 (RLLIVGGGLIGCEVATTARKLGLSVTILE).

The protein belongs to the bacterial ring-hydroxylating dioxygenase ferredoxin reductase family. As to quaternary structure, this dioxygenase system consists of four proteins: the two subunits of the hydroxylase component (todC1 and todC2), a ferredoxin (TodB) and a ferredoxin reductase (TodA). FAD serves as cofactor.

The enzyme catalyses 2 reduced [2Fe-2S]-[ferredoxin] + NAD(+) + H(+) = 2 oxidized [2Fe-2S]-[ferredoxin] + NADH. It participates in xenobiotic degradation; toluene degradation. Functionally, part of the electron transfer component of toluene 1,2-dioxygenase, transfers electrons from ferredoxin (TodB) to NADH. This Pseudomonas putida (strain ATCC 700007 / DSM 6899 / JCM 31910 / BCRC 17059 / LMG 24140 / F1) protein is Toluene 1,2-dioxygenase system ferredoxin--NAD(+) reductase component (todA).